The following is a 67-amino-acid chain: Conotoxin Cal12.1p2 (67 aa).

A propeptide spanning residues 1–21 is cleaved from the precursor; sequence DLITNSYTRGKPRHVTSWRNL.

Post-translationally, contains 4 disulfide bonds. In terms of tissue distribution, expressed by the venom duct.

The protein resides in the secreted. This Californiconus californicus (California cone) protein is Conotoxin Cal12.1p2.